Reading from the N-terminus, the 205-residue chain is Thiamine-phosphate synthase (205 aa).

4-amino-2-methyl-5-(diphosphooxymethyl)pyrimidine-binding positions include 37 to 41 and Asn-69; that span reads QVREK. Positions 70 and 89 each coordinate Mg(2+). Ser-108 lines the 4-amino-2-methyl-5-(diphosphooxymethyl)pyrimidine pocket. 134 to 136 lines the 2-[(2R,5Z)-2-carboxy-4-methylthiazol-5(2H)-ylidene]ethyl phosphate pocket; that stretch reads TGS. Lys-137 lines the 4-amino-2-methyl-5-(diphosphooxymethyl)pyrimidine pocket. 2-[(2R,5Z)-2-carboxy-4-methylthiazol-5(2H)-ylidene]ethyl phosphate contacts are provided by residues Gly-165 and 185-186; that span reads IS.

It belongs to the thiamine-phosphate synthase family. Requires Mg(2+) as cofactor.

The enzyme catalyses 2-[(2R,5Z)-2-carboxy-4-methylthiazol-5(2H)-ylidene]ethyl phosphate + 4-amino-2-methyl-5-(diphosphooxymethyl)pyrimidine + 2 H(+) = thiamine phosphate + CO2 + diphosphate. It catalyses the reaction 2-(2-carboxy-4-methylthiazol-5-yl)ethyl phosphate + 4-amino-2-methyl-5-(diphosphooxymethyl)pyrimidine + 2 H(+) = thiamine phosphate + CO2 + diphosphate. It carries out the reaction 4-methyl-5-(2-phosphooxyethyl)-thiazole + 4-amino-2-methyl-5-(diphosphooxymethyl)pyrimidine + H(+) = thiamine phosphate + diphosphate. Its pathway is cofactor biosynthesis; thiamine diphosphate biosynthesis; thiamine phosphate from 4-amino-2-methyl-5-diphosphomethylpyrimidine and 4-methyl-5-(2-phosphoethyl)-thiazole: step 1/1. In terms of biological role, condenses 4-methyl-5-(beta-hydroxyethyl)thiazole monophosphate (THZ-P) and 2-methyl-4-amino-5-hydroxymethyl pyrimidine pyrophosphate (HMP-PP) to form thiamine monophosphate (TMP). The protein is Thiamine-phosphate synthase of Clostridium botulinum (strain Langeland / NCTC 10281 / Type F).